We begin with the raw amino-acid sequence, 116 residues long: Appetite-regulating hormone (116 aa).

The first 23 residues, 1–23, serve as a signal peptide directing secretion; it reads MPAPRTICSLLLLSMLWMDLAMA. The O-decanoyl serine; alternate moiety is linked to residue Ser-26. Ser-26 carries the O-hexanoyl serine; alternate lipid modification. Ser-26 carries O-octanoyl serine; alternate lipidation. Residues 29–67 form a disordered region; sequence SPEHQKLQRKEPKKPSGRLKPRALEGQFDPDVGSQEEGA. Residues 31-42 are compositionally biased toward basic and acidic residues; the sequence is EHQKLQRKEPKK. The propeptide at 51–74 is removed in mature form; it reads ALEGQFDPDVGSQEEGAEDELEIR. Leu-97 is modified (leucine amide). The propeptide at 98–116 is removed in mature form; it reads GKFLQDILWEEAEETLADE.

It belongs to the motilin family. In terms of processing, O-octanoylated by GOAT/MBOAT4. O-octanoylation is essential for ghrelin activity. Amidation of Leu-97 is essential for obestatin activity.

It localises to the secreted. Its function is as follows. Ghrelin is the ligand for growth hormone secretagogue receptor type 1 (GHSR). Induces the release of growth hormone from the pituitary. Has an appetite-stimulating effect, induces adiposity and stimulates gastric acid secretion. Involved in growth regulation. Obestatin may be the ligand for GPR39. May have an appetite-reducing effect resulting in decreased food intake. May reduce gastric emptying activity and jejunal motility. The sequence is that of Appetite-regulating hormone (GHRL) from Capra hircus (Goat).